The following is a 283-amino-acid chain: Pantothenate synthetase (283 aa).

30–37 (MGALHEGH) contacts ATP. Histidine 37 serves as the catalytic Proton donor. A (R)-pantoate-binding site is contributed by glutamine 61. Position 61 (glutamine 61) interacts with beta-alanine. 147-150 (GEKD) is a binding site for ATP. Glutamine 153 is a binding site for (R)-pantoate. ATP contacts are provided by residues valine 176 and 184–187 (VSSR).

Belongs to the pantothenate synthetase family. As to quaternary structure, homodimer.

The protein resides in the cytoplasm. It carries out the reaction (R)-pantoate + beta-alanine + ATP = (R)-pantothenate + AMP + diphosphate + H(+). Its pathway is cofactor biosynthesis; (R)-pantothenate biosynthesis; (R)-pantothenate from (R)-pantoate and beta-alanine: step 1/1. Its function is as follows. Catalyzes the condensation of pantoate with beta-alanine in an ATP-dependent reaction via a pantoyl-adenylate intermediate. In Chlorobium limicola (strain DSM 245 / NBRC 103803 / 6330), this protein is Pantothenate synthetase.